Consider the following 532-residue polypeptide: Flavin-containing monooxygenase 1 (532 aa).

At Ala2 the chain carries N-acetylalanine. At 2-510 the chain is on the lumenal side; the sequence is AKRVAIVGAG…TRIVQESPTP (509 aa). FAD-binding positions include 9-13, Glu32, 40-41, and 61-62; these read GAGVS, LW, and NS. Residues 60–61 and 195–198 contribute to the NADP(+) site; these read SN and SGTD. The helical transmembrane segment at 511–531 threads the bilayer; it reads FASLLKLLSLLALLMAIFLIF. A topological domain (cytoplasmic) is located at residue Leu532.

This sequence belongs to the FMO family. The cofactor is FAD. As to expression, liver.

It is found in the endoplasmic reticulum membrane. It carries out the reaction hypotaurine + NADPH + O2 + H(+) = taurine + NADP(+) + H2O. It catalyses the reaction hypotaurine + NADH + O2 + H(+) = taurine + NAD(+) + H2O. The catalysed reaction is trimethylamine + NADPH + O2 = trimethylamine N-oxide + NADP(+) + H2O. The enzyme catalyses N,N-dimethylaniline + NADPH + O2 + H(+) = N,N-dimethylaniline N-oxide + NADP(+) + H2O. Broad spectrum monooxygenase that catalyzes the oxygenation of a wide variety of nitrogen- and sulfur-containing compounds including xenobiotics. Catalyzes the S-oxygenation of hypotaurine to produce taurine, an organic osmolyte involved in cell volume regulation as well as a variety of cytoprotective and developmental processes. In vitro, catalyzes the N-oxygenation of trimethylamine (TMA) to produce trimethylamine N-oxide (TMAO) and could therefore participate to the detoxification of this compound that is generated by the action of gut microbiota from dietary precursors such as choline, choline containing compounds, betaine or L-carnitine. This is Flavin-containing monooxygenase 1 (FMO1) from Canis lupus familiaris (Dog).